Consider the following 632-residue polypeptide: Golgin subfamily A member 8N (632 aa).

The disordered stretch occupies residues 1-76 (MAEETQHNKL…TSSATLKDLE (76 aa)). Polar residues predominate over residues 38–50 (TNGSIPETATSGG). Coiled coils occupy residues 85-150 (VLDS…TDLY) and 209-421 (ELEQ…SLMA). Disordered stretches follow at residues 423–445 (PGEGHGGEHLDSEGEEAPQPMPS), 505–524 (DAALGGGHHQAGAQGGDEGE), and 552–573 (NSADEPGPGAPAPQELGAADKH). Positions 508–520 (LGGGHHQAGAQGG) are enriched in gly residues.

It belongs to the GOLGA8 family.

This is Golgin subfamily A member 8N from Homo sapiens (Human).